Consider the following 130-residue polypeptide: Small ribosomal subunit protein uS8 (130 aa).

This sequence belongs to the universal ribosomal protein uS8 family. In terms of assembly, part of the 30S ribosomal subunit. Contacts proteins S5 and S12.

Its function is as follows. One of the primary rRNA binding proteins, it binds directly to 16S rRNA central domain where it helps coordinate assembly of the platform of the 30S subunit. This Aliivibrio fischeri (strain MJ11) (Vibrio fischeri) protein is Small ribosomal subunit protein uS8.